Here is a 105-residue protein sequence, read N- to C-terminus: uncharacterized protein (105 aa).

A run of 3 helical transmembrane segments spans residues 3-23, 41-61, and 63-83; these read ISPLIAGLIGGFTAAILQALF, DLVNWIINHLFGTTLGMALVS, and AFPVLTVVGIFIGALITTFIY.

It is found in the cell membrane. This is an uncharacterized protein from Methanocaldococcus jannaschii (strain ATCC 43067 / DSM 2661 / JAL-1 / JCM 10045 / NBRC 100440) (Methanococcus jannaschii).